Consider the following 297-residue polypeptide: ClpXP adapter protein SpxH (297 aa).

This sequence belongs to the SpxH family. In terms of assembly, interacts with Spx.

It is found in the cytoplasm. Adapter protein required for efficient degradation of Spx by ClpXP under non-stress conditions. Interaction with Spx stabilizes Spx and exposes the C-terminus of Spx for recognition and proteolysis by ClpXP. This Bacillus cereus (strain ATCC 10987 / NRS 248) protein is ClpXP adapter protein SpxH.